Here is a 481-residue protein sequence, read N- to C-terminus: Glutamate-1-semialdehyde 2,1-aminomutase, chloroplastic (481 aa).

Positions 18–40 are disordered; the sequence is NQTPKWGFSPSHRRCNPSSSSSA. N6-(pyridoxal phosphate)lysine is present on Lys321.

Belongs to the class-III pyridoxal-phosphate-dependent aminotransferase family. HemL subfamily. Homodimer. Requires pyridoxal 5'-phosphate as cofactor.

The protein resides in the plastid. It localises to the chloroplast. The catalysed reaction is (S)-4-amino-5-oxopentanoate = 5-aminolevulinate. Its pathway is porphyrin-containing compound metabolism; protoporphyrin-IX biosynthesis; 5-aminolevulinate from L-glutamyl-tRNA(Glu): step 2/2. It participates in porphyrin-containing compound metabolism; chlorophyll biosynthesis. This is Glutamate-1-semialdehyde 2,1-aminomutase, chloroplastic from Solanum lycopersicum (Tomato).